A 256-amino-acid polypeptide reads, in one-letter code: uncharacterized protein (256 aa).

Transmembrane regions (helical) follow at residues 5 to 25 (FIEG…NYLL), 30 to 50 (ILST…LKVF), 64 to 84 (VVIF…DPAI), and 105 to 125 (VGIT…LGII). Residues 198-256 (EKTKSLDSISHSSSSSRKSSTELKIPPVETRIVAEIPVPSSVKRRRHRPNKSMGSIKNS) are disordered. The span at 203-215 (LDSISHSSSSSRK) shows a compositional bias: low complexity. A phosphoserine mark is found at Ser210 and Ser211.

It localises to the endoplasmic reticulum membrane. Its subcellular location is the nucleus membrane. This is an uncharacterized protein from Schizosaccharomyces pombe (strain 972 / ATCC 24843) (Fission yeast).